Reading from the N-terminus, the 551-residue chain is Eukaryotic translation initiation factor 3 subunit D-2 (551 aa).

The tract at residues 108–152 (RTRGRTGRGTPNIASLGGSTAGGATASSTKYGKGRHTRNTQNVGR) is disordered. Over residues 115–136 (RGTPNIASLGGSTAGGATASST) the composition is skewed to low complexity. Residues 290–304 (QFDLLTVNETSVEPP) form an RNA gate region. The segment at 527-551 (PENAFDSDRDEEEESSEPLSNSNDN) is disordered.

Belongs to the eIF-3 subunit D family. As to quaternary structure, component of the eukaryotic translation initiation factor 3 (eIF-3) complex. The eIF-3 complex interacts with pix.

It is found in the cytoplasm. Its function is as follows. mRNA cap-binding component of the eukaryotic translation initiation factor 3 (eIF-3) complex, which is involved in protein synthesis of a specialized repertoire of mRNAs and, together with other initiation factors, stimulates binding of mRNA and methionyl-tRNAi to the 40S ribosome. The eIF-3 complex specifically targets and initiates translation of a subset of mRNAs involved in cell proliferation. In the eIF-3 complex, eif3d specifically recognizes and binds the 7-methylguanosine cap of a subset of mRNAs. In Drosophila simulans (Fruit fly), this protein is Eukaryotic translation initiation factor 3 subunit D-2.